We begin with the raw amino-acid sequence, 346 residues long: UPF0283 membrane protein VP1870 (346 aa).

The interval 1–30 (MSELKQKQIFSEKALEKEQQSDSPELTAQK) is disordered. The segment covering 21–30 (SDSPELTAQK) has biased composition (polar residues). 2 helical membrane-spanning segments follow: residues 73–93 (VFAT…VTAV) and 98–118 (WLAL…LGAI).

This sequence belongs to the UPF0283 family.

The protein resides in the cell inner membrane. This is UPF0283 membrane protein VP1870 from Vibrio parahaemolyticus serotype O3:K6 (strain RIMD 2210633).